The following is a 359-amino-acid chain: Peptide chain release factor 1 (359 aa).

Gln235 bears the N5-methylglutamine mark. Positions 283–309 (QKAESERSQARRSQVGSGDRSERIRTY) are disordered.

The protein belongs to the prokaryotic/mitochondrial release factor family. Methylated by PrmC. Methylation increases the termination efficiency of RF1.

It is found in the cytoplasm. Its function is as follows. Peptide chain release factor 1 directs the termination of translation in response to the peptide chain termination codons UAG and UAA. In Brucella abortus (strain S19), this protein is Peptide chain release factor 1.